Reading from the N-terminus, the 177-residue chain is Peroxiredoxin-2 (177 aa).

An N-acetylalanine modification is found at Ala-2. The Thioredoxin domain occupies 6–164 (ARIGKPAPDF…ALRLVQAFQY (159 aa)). Cys-51 functions as the Cysteine sulfenic acid (-SOH) intermediate in the catalytic mechanism. Ser-112 bears the Phosphoserine mark.

It belongs to the peroxiredoxin family. AhpC/Prx1 subfamily. Homodimer; disulfide-linked, upon oxidation. 5 homodimers assemble to form a ring-like decamer. Interacts with TIPIN. In terms of processing, the enzyme can be inactivated by further oxidation of the cysteine sulfenic acid (C(P)-SOH) to sulphinic acid (C(P)-SO2H) instead of its condensation to a disulfide bond. It can be reactivated by forming a transient disulfide bond with sulfiredoxin SRXN1, which reduces the cysteine sulfinic acid in an ATP- and Mg-dependent manner. Post-translationally, acetylation increases resistance to transition to high molecular-mass complexes. Deacetylated by HDAC6 which decreases reducing activity.

It localises to the cytoplasm. It catalyses the reaction a hydroperoxide + [thioredoxin]-dithiol = an alcohol + [thioredoxin]-disulfide + H2O. In terms of biological role, thiol-specific peroxidase that catalyzes the reduction of hydrogen peroxide and organic hydroperoxides to water and alcohols, respectively. Plays a role in cell protection against oxidative stress by detoxifying peroxides and as sensor of hydrogen peroxide-mediated signaling events. Might participate in the signaling cascades of growth factors and tumor necrosis factor-alpha by regulating the intracellular concentrations of H(2)O(2). The sequence is that of Peroxiredoxin-2 (PRDX2) from Pongo abelii (Sumatran orangutan).